The chain runs to 254 residues: MSFTVIIPARFASSRLPGKPLADIAGKPMIQHVFEKALQSGANRVIIATDNENVADVAKNFGAEVCMTSVNHNSGTERLAEVVEKLAIPDNEIIVNIQGDEPLIPPVIVRQVADNLAKFNVNMASLAVKIHDAEELFNPNAVKVLTDKDGYVLYFSRSVIPYDRDQFMNLQDVQKVQLADAYLRHIGIYAYRAGFIKQYVQWAPTQLENLEKLEQLRVLYNGERIHVELAKEVPAVGVDTAEDLEKVRAILAAN.

The protein belongs to the KdsB family.

The protein localises to the cytoplasm. It catalyses the reaction 3-deoxy-alpha-D-manno-oct-2-ulosonate + CTP = CMP-3-deoxy-beta-D-manno-octulosonate + diphosphate. Its pathway is nucleotide-sugar biosynthesis; CMP-3-deoxy-D-manno-octulosonate biosynthesis; CMP-3-deoxy-D-manno-octulosonate from 3-deoxy-D-manno-octulosonate and CTP: step 1/1. The protein operates within bacterial outer membrane biogenesis; lipopolysaccharide biosynthesis. Functionally, activates KDO (a required 8-carbon sugar) for incorporation into bacterial lipopolysaccharide in Gram-negative bacteria. The protein is 3-deoxy-manno-octulosonate cytidylyltransferase of Haemophilus influenzae (strain 86-028NP).